We begin with the raw amino-acid sequence, 336 residues long: Flavonoid 4'-O-methyltransferase 5 (336 aa).

The S-adenosyl-L-methionine site is built by Tyr-140 and Asp-203. His-241 serves as the catalytic Proton acceptor.

The protein belongs to the class I-like SAM-binding methyltransferase superfamily. Cation-independent O-methyltransferase family. Homodimer. In terms of tissue distribution, expressed in leaves.

The catalysed reaction is genkwanin + S-adenosyl-L-methionine = apigenin 4',7-dimethyl ether + S-adenosyl-L-homocysteine. It carries out the reaction cirsiliol + S-adenosyl-L-methionine = eupatorin + S-adenosyl-L-homocysteine + H(+). It catalyses the reaction cirsimaritin + S-adenosyl-L-methionine = salvigenin + S-adenosyl-L-homocysteine + H(+). The enzyme catalyses scutellarein 7-methyl ether + S-adenosyl-L-methionine = ladanein + S-adenosyl-L-homocysteine + H(+). The catalysed reaction is (2S)-sakuranetin + S-adenosyl-L-methionine = (2S)-naringenin 4',7-dimethyl ether + S-adenosyl-L-homocysteine + H(+). It functions in the pathway flavonoid metabolism. Its activity is regulated as follows. Substrate inhibition by genkwanin (GENK) at concentrations above 10 mM. Flavonoid 4'-O-methyltransferase involved in the biosynthesis of polymethoxylated flavonoids natural products such as nevadensin and salvigenin, aroma compounds which contribute to the flavor of sweet basil, and exhibit pharmacological activities such as anti-allergic, anti-oxidant, antibacterial, anti-proliferative, and anti-inflammatory effects. Catalyzes S-adenosylmethionine-dependent regioselective 4'-O-methylation of flavonoids; active on various hydroxylated flavonoid substrates, including scutellarein-7-methyl ether (SCU7Me) and, with a lower efficiency, cirsimaritin (CIRM), sakuranetin (NAR7Me), ladanein (LAD) and genkwanin (GENK). The polypeptide is Flavonoid 4'-O-methyltransferase 5 (Ocimum basilicum (Sweet basil)).